Here is a 179-residue protein sequence, read N- to C-terminus: MTRLEQIYREKVVPVLQKEFNYTSSMQVPGIEKVSLNIGLGAASQNNKLMEEAIKELTAIAGQKAVVTRAKKSIASFKLREGMPIGCRVTLRKERMWDFLDKLMNFALPRVRDFRGIPDRGFDGRGNFTLGIKEHTIFPELEVDRVDNPKGMNITIVTTAQTDKEGKLLLDQLGMPFKK.

It belongs to the universal ribosomal protein uL5 family. In terms of assembly, part of the 50S ribosomal subunit; part of the 5S rRNA/L5/L18/L25 subcomplex. Contacts the 5S rRNA and the P site tRNA. Forms a bridge to the 30S subunit in the 70S ribosome.

Functionally, this is one of the proteins that bind and probably mediate the attachment of the 5S RNA into the large ribosomal subunit, where it forms part of the central protuberance. In the 70S ribosome it contacts protein S13 of the 30S subunit (bridge B1b), connecting the 2 subunits; this bridge is implicated in subunit movement. Contacts the P site tRNA; the 5S rRNA and some of its associated proteins might help stabilize positioning of ribosome-bound tRNAs. This Nitratidesulfovibrio vulgaris (strain DSM 19637 / Miyazaki F) (Desulfovibrio vulgaris) protein is Large ribosomal subunit protein uL5.